The primary structure comprises 408 residues: Flavohemoprotein (408 aa).

A Globin domain is found at 1-138; it reads MLSEKTIRIV…LADIFIGREG (138 aa). Heme b is bound at residue His-85. Active-site charge relay system residues include Tyr-95 and Glu-137. Residues 149–408 are reductase; that stretch reads GGWNGTRTFV…FGPKEELVAV (260 aa). The 112-residue stretch at 152–263 folds into the FAD-binding FR-type domain; it reads NGTRTFVVTK…GPPCGEFTVD (112 aa). FAD-binding positions include Tyr-190 and 205 to 208; that span reads RNYS. NADP(+) is bound at residue 277–282; the sequence is GIGVTP. An FAD-binding site is contributed by 398 to 401; that stretch reads FFGP.

Belongs to the globin family. Two-domain flavohemoproteins subfamily. It in the C-terminal section; belongs to the flavoprotein pyridine nucleotide cytochrome reductase family. It depends on heme b as a cofactor. FAD serves as cofactor.

It catalyses the reaction 2 nitric oxide + NADPH + 2 O2 = 2 nitrate + NADP(+) + H(+). It carries out the reaction 2 nitric oxide + NADH + 2 O2 = 2 nitrate + NAD(+) + H(+). In Rhodopirellula baltica (strain DSM 10527 / NCIMB 13988 / SH1), this protein is Flavohemoprotein.